A 336-amino-acid polypeptide reads, in one-letter code: NADH-quinone oxidoreductase subunit H (336 aa).

8 helical membrane passes run 17-37 (WFII…TYAI), 85-105 (ALFT…LAVM), 116-136 (LGIG…GVIT), 154-174 (AAQM…IVLL), 190-210 (VWNI…AQAE), 247-267 (VYMF…WLPI), 274-294 (IPGI…QFWI), and 309-329 (FAWK…AVVV).

The protein belongs to the complex I subunit 1 family. As to quaternary structure, NDH-1 is composed of 14 different subunits. Subunits NuoA, H, J, K, L, M, N constitute the membrane sector of the complex.

The protein localises to the cell membrane. The enzyme catalyses a quinone + NADH + 5 H(+)(in) = a quinol + NAD(+) + 4 H(+)(out). Its function is as follows. NDH-1 shuttles electrons from NADH, via FMN and iron-sulfur (Fe-S) centers, to quinones in the respiratory chain. The immediate electron acceptor for the enzyme in this species is believed to be ubiquinone. Couples the redox reaction to proton translocation (for every two electrons transferred, four hydrogen ions are translocated across the cytoplasmic membrane), and thus conserves the redox energy in a proton gradient. This subunit may bind ubiquinone. This is NADH-quinone oxidoreductase subunit H from Brevibacillus brevis (strain 47 / JCM 6285 / NBRC 100599).